The chain runs to 189 residues: Interferon alpha-A (189 aa).

The N-terminal stretch at 1-23 is a signal peptide; the sequence is MAPAWSFLLSLLLLSCNAICSLG. Disulfide bonds link Cys24–Cys122 and Cys52–Cys162.

The protein belongs to the alpha/beta interferon family.

It is found in the secreted. Its function is as follows. Produced by macrophages, IFN-alpha have antiviral activities. Interferon stimulates the production of two enzymes: a protein kinase and an oligoadenylate synthetase. The protein is Interferon alpha-A (IFNAA) of Bos taurus (Bovine).